Reading from the N-terminus, the 363-residue chain is UDP-N-acetylenolpyruvoylglucosamine reductase (363 aa).

Residues 25–201 (IGPVARRMLT…RSAPVRYREL (177 aa)) enclose the FAD-binding PCMH-type domain. The active site involves R168. The active-site Proton donor is S249. E352 is a catalytic residue.

The protein belongs to the MurB family. It depends on FAD as a cofactor.

The protein resides in the cytoplasm. The catalysed reaction is UDP-N-acetyl-alpha-D-muramate + NADP(+) = UDP-N-acetyl-3-O-(1-carboxyvinyl)-alpha-D-glucosamine + NADPH + H(+). The protein operates within cell wall biogenesis; peptidoglycan biosynthesis. Its function is as follows. Cell wall formation. The polypeptide is UDP-N-acetylenolpyruvoylglucosamine reductase (Mycolicibacterium smegmatis (strain ATCC 700084 / mc(2)155) (Mycobacterium smegmatis)).